Here is a 263-residue protein sequence, read N- to C-terminus: TLC domain-containing protein 4 (263 aa).

4 helical membrane-spanning segments follow: residues 7-27, 53-73, 90-110, and 124-144; these read LLISVTCISFFTFQLLFYFVS, VVSTCHSLVVGIFGLYIFLFD, VNIAIASGYLISDLSIIILYW, and ASLYAYYLVLKNGVLAYIGNF. In terms of domain architecture, TLC spans 44–246; the sequence is KKKIEWNSRV…ISKGCIKVIS (203 aa). Lysine 165 is subject to N6-acetyllysine. The next 2 membrane-spanning stretches (helical) occupy residues 173–193 and 211–231; these read IVINGILMTVVFFIVRIASML and LGVLIQLSWVISCVVLDVMNV.

This sequence belongs to the TLCD4 family.

Its subcellular location is the membrane. The sequence is that of TLC domain-containing protein 4 from Homo sapiens (Human).